Reading from the N-terminus, the 261-residue chain is Pimeloyl-[acyl-carrier protein] methyl ester esterase (261 aa).

Positions 16 to 241 constitute an AB hydrolase-1 domain; that stretch reads LVLLHGWGLN…HAAHAPFISH (226 aa). Substrate contacts are provided by residues Trp-22, 82–83, and 143–147; these read SL and FLALQ. The active-site Nucleophile is the Ser-82. Catalysis depends on residues Asp-207 and His-235. Residue His-235 coordinates substrate.

Belongs to the AB hydrolase superfamily. Carboxylesterase BioH family. Monomer.

The protein resides in the cytoplasm. It catalyses the reaction 6-carboxyhexanoyl-[ACP] methyl ester + H2O = 6-carboxyhexanoyl-[ACP] + methanol + H(+). It participates in cofactor biosynthesis; biotin biosynthesis. In terms of biological role, the physiological role of BioH is to remove the methyl group introduced by BioC when the pimeloyl moiety is complete. It allows to synthesize pimeloyl-ACP via the fatty acid synthetic pathway through the hydrolysis of the ester bonds of pimeloyl-ACP esters. This is Pimeloyl-[acyl-carrier protein] methyl ester esterase from Photorhabdus laumondii subsp. laumondii (strain DSM 15139 / CIP 105565 / TT01) (Photorhabdus luminescens subsp. laumondii).